The chain runs to 258 residues: NAD kinase (258 aa).

Aspartate 45 (proton acceptor) is an active-site residue. Residues 45-46 (DG), 117-118 (NE), aspartate 147, alanine 155, 158-163 (TAYNYS), and alanine 182 contribute to the NAD(+) site.

This sequence belongs to the NAD kinase family. The cofactor is a divalent metal cation.

It localises to the cytoplasm. The catalysed reaction is NAD(+) + ATP = ADP + NADP(+) + H(+). In terms of biological role, involved in the regulation of the intracellular balance of NAD and NADP, and is a key enzyme in the biosynthesis of NADP. Catalyzes specifically the phosphorylation on 2'-hydroxyl of the adenosine moiety of NAD to yield NADP. The protein is NAD kinase of Xanthomonas campestris pv. campestris (strain 8004).